The primary structure comprises 298 residues: uncharacterized protein (298 aa).

In terms of domain architecture, ABC transporter spans 2 to 229 (LTIDHVTKTF…FGKKNVTIHS (228 aa)). 34–41 (GANGAGKT) serves as a coordination point for ATP.

It belongs to the ABC transporter superfamily.

It is found in the cell membrane. This is an uncharacterized protein from Bacillus subtilis (strain 168).